The chain runs to 313 residues: E3 ubiquitin-protein ligase RNF126 (313 aa).

Alanine 2 bears the N-acetylalanine mark. Serine 5 bears the Phosphoserine mark. The tract at residues 5–101 (SPQPGRYFCH…FEIPTFPPGA (97 aa)) is required for interaction with BAG6. 4 residues coordinate Zn(2+): cysteine 13, cysteine 16, cysteine 29, and cysteine 32. A C4-type zinc finger spans residues 13 to 32 (CHCCSVEIVPRLPDYICPRC). Disordered stretches follow at residues 42 to 64 (EETR…SRQQ) and 96 to 128 (TFPP…ARQP). A compositionally biased stretch (polar residues) spans 47–64 (AENGSAPSTASADQSRQQ). Over residues 104 to 117 (DDSRDPESRREREQ) the composition is skewed to basic and acidic residues. A compositionally biased stretch (basic residues) spans 118-128 (HSRHRYGARQP). Residues 203–306 (TGPPPADKEK…SSSSSSSPGN (104 aa)) form a sufficient for interaction with AICDA region. An RING-type zinc finger spans residues 232 to 273 (CPVCKDDYGLGEHVRQLPCNHLFHDGCIVPWLEQHDSCPVCR). The disordered stretch occupies residues 280-313 (NTATDPPGLAGVSFSSSSSSSSSSPGNENPASSS). Positions 292 to 313 (SFSSSSSSSSSSPGNENPASSS) are enriched in low complexity.

As to quaternary structure, interacts with CCDC50, EGFR, FLT3 and SCAMP3. Interacts with BAG6 (via ubiquitin-like domain); required for BAG6-dependent ubiquitination of proteins mislocalized to the cytosol. Interacts with CDKN1A. Interacts with AICDA. Post-translationally, ubiquitinated. May undergo autoubiquitination.

Its subcellular location is the cytoplasm. It localises to the nucleus. The catalysed reaction is S-ubiquitinyl-[E2 ubiquitin-conjugating enzyme]-L-cysteine + [acceptor protein]-L-lysine = [E2 ubiquitin-conjugating enzyme]-L-cysteine + N(6)-ubiquitinyl-[acceptor protein]-L-lysine.. The protein operates within protein modification; protein ubiquitination. In terms of biological role, E3 ubiquitin-protein ligase that mediates ubiquitination oF target proteins. Depending on the associated E2 ligase, mediates 'Lys-27'-, 'Lys-29'-, 'Lys-48'- and/or 'Lys-63'-linked polyubiquitination of substrates. Part of a BAG6-dependent quality control process ensuring that proteins of the secretory pathway that are mislocalized to the cytosol are degraded by the proteasome. Probably acts by providing the ubiquitin ligase activity associated with the BAG6 complex and be responsible for ubiquitination of the hydrophobic mislocalized proteins and their targeting to the proteasome. May also play a role in the endosomal recycling of IGF2R, the cation-independent mannose-6-phosphate receptor. May play a role in the endosomal sorting and degradation of several membrane receptors including EGFR, FLT3, MET and CXCR4, by mediating their ubiquitination. By ubiquitinating CDKN1A/p21 and targeting it for degradation, may also promote cell proliferation. May monoubiquitinate AICDA. Acts as a regulator of DNA repair by mediating 'Lys-27'- and 'Lys-29'-linked polyubiquitination of MRE11, thereby promoting the exonuclease activity of MRE11. This chain is E3 ubiquitin-protein ligase RNF126, found in Bos taurus (Bovine).